A 449-amino-acid chain; its full sequence is PC-esterase domain-containing protein 1A (449 aa).

Belongs to the PC-esterase family.

The polypeptide is PC-esterase domain-containing protein 1A (Pced1a) (Mus musculus (Mouse)).